Consider the following 365-residue polypeptide: Histidinol-phosphate aminotransferase (365 aa).

The tract at residues 1 to 22 (MSRPVPNPGILDIAPYTPGKSP) is disordered. The residue at position 221 (Lys221) is an N6-(pyridoxal phosphate)lysine.

The protein belongs to the class-II pyridoxal-phosphate-dependent aminotransferase family. Histidinol-phosphate aminotransferase subfamily. Homodimer. Requires pyridoxal 5'-phosphate as cofactor.

It catalyses the reaction L-histidinol phosphate + 2-oxoglutarate = 3-(imidazol-4-yl)-2-oxopropyl phosphate + L-glutamate. It participates in amino-acid biosynthesis; L-histidine biosynthesis; L-histidine from 5-phospho-alpha-D-ribose 1-diphosphate: step 7/9. The polypeptide is Histidinol-phosphate aminotransferase (Rhodopseudomonas palustris (strain BisB5)).